A 309-amino-acid chain; its full sequence is Sulfate adenylyltransferase subunit 2 (309 aa).

Belongs to the PAPS reductase family. CysD subfamily. In terms of assembly, heterodimer composed of CysD, the smaller subunit, and CysN.

It carries out the reaction sulfate + ATP + H(+) = adenosine 5'-phosphosulfate + diphosphate. It functions in the pathway sulfur metabolism; hydrogen sulfide biosynthesis; sulfite from sulfate: step 1/3. Its function is as follows. With CysN forms the ATP sulfurylase (ATPS) that catalyzes the adenylation of sulfate producing adenosine 5'-phosphosulfate (APS) and diphosphate, the first enzymatic step in sulfur assimilation pathway. APS synthesis involves the formation of a high-energy phosphoric-sulfuric acid anhydride bond driven by GTP hydrolysis by CysN coupled to ATP hydrolysis by CysD. This Methylorubrum extorquens (strain CM4 / NCIMB 13688) (Methylobacterium extorquens) protein is Sulfate adenylyltransferase subunit 2.